The following is a 287-amino-acid chain: NAD kinase (287 aa).

Asp70 functions as the Proton acceptor in the catalytic mechanism. NAD(+) is bound by residues 70–71 (DG), 144–145 (ND), Arg155, Lys172, Asp174, 185–190 (TAYSLS), and Gln244.

Belongs to the NAD kinase family. A divalent metal cation is required as a cofactor.

The protein localises to the cytoplasm. The enzyme catalyses NAD(+) + ATP = ADP + NADP(+) + H(+). Functionally, involved in the regulation of the intracellular balance of NAD and NADP, and is a key enzyme in the biosynthesis of NADP. Catalyzes specifically the phosphorylation on 2'-hydroxyl of the adenosine moiety of NAD to yield NADP. The chain is NAD kinase from Solibacter usitatus (strain Ellin6076).